The chain runs to 148 residues: Arginine repressor (148 aa).

The protein belongs to the ArgR family.

It is found in the cytoplasm. The protein operates within amino-acid biosynthesis; L-arginine biosynthesis [regulation]. Functionally, regulates arginine biosynthesis genes. This chain is Arginine repressor, found in Koribacter versatilis (strain Ellin345).